The sequence spans 240 residues: Glutathione-independent glyoxalase hsp3102 (240 aa).

Catalysis depends on residues cysteine 141, histidine 142, and glutamate 175.

This sequence belongs to the peptidase C56 family. HSP31-like subfamily.

The protein resides in the cytoplasm. It localises to the nucleus. The catalysed reaction is methylglyoxal + H2O = (R)-lactate + H(+). In terms of biological role, catalyzes the conversion of methylglyoxal (MG) to D-lactate in a single glutathione (GSH)-independent step. May play a role in detoxifying endogenously produced glyoxals. Involved in protection against reactive oxygen species (ROS). In Schizosaccharomyces pombe (strain 972 / ATCC 24843) (Fission yeast), this protein is Glutathione-independent glyoxalase hsp3102.